Reading from the N-terminus, the 1806-residue chain is Atrochrysone carboxylic acid synthase (1806 aa).

The segment at 30–283 (DLQGLFRRLY…SLPVYSGLCH (254 aa)) is N-terminal acylcarrier protein transacylase domain (SAT). Positions 416–850 (QSKIAIIGMS…GGNTTVCLEE (435 aa)) constitute a Ketosynthase family 3 (KS3) domain. Catalysis depends on for beta-ketoacyl synthase activity residues Cys589, His725, and His768. Residues 951–1270 (FAFTGQGASY…SLTALHCAGV (320 aa)) form a malonyl-CoA:ACP transacylase (MAT) domain region. The product template (PT) domain stretch occupies residues 1340-1659 (TSTVQQIIEE…RILLNRFFTA (320 aa)). Positions 1344–1479 (QQIIEESFNG…ASILYDDAAL (136 aa)) are N-terminal hotdog fold. A PKS/mFAS DH domain is found at 1344–1654 (QQIIEESFNG…FRRYPRILLN (311 aa)). Residue His1376 is the Proton acceptor; for dehydratase activity of the active site. Residues 1506–1654 (IANRFTRNMA…FRRYPRILLN (149 aa)) form a C-terminal hotdog fold region. The active-site Proton donor; for dehydratase activity is the Asp1565. The tract at residues 1668–1726 (HAAASSTPAPRTKPEPVPVATPATAAAPVAQSPAAPASVTPAPAPAPAPGPTPAAAPAA) is disordered. The segment covering 1685 to 1708 (PVATPATAAAPVAQSPAAPASVTP) has biased composition (low complexity). Pro residues predominate over residues 1709–1721 (APAPAPAPGPTPA). The Carrier domain maps to 1728–1805 (GESDSVAAKA…DLRSWLLEYY (78 aa)). Ser1765 carries the O-(pantetheine 4'-phosphoryl)serine modification.

The catalysed reaction is holo-[ACP] + 8 malonyl-CoA + 8 H(+) = atrochrysone carboxyl-[ACP] + 8 CO2 + 8 CoA + 2 H2O. The protein operates within secondary metabolite biosynthesis. Its function is as follows. Atrochrysone carboxylic acid synthase; part of the gene cluster that mediates the biosynthesis of monodictyphenone, a prenyl xanthone derivative. The pathway begins with the synthesis of atrochrysone thioester by the polyketide synthase (PKS) mdpG. The atrochrysone carboxyl ACP thioesterase mdpF then breaks the thioester bond and releases the atrochrysone carboxylic acid from mdpG. The atrochrysone carboxylic acid is then converted to atrochrysone which is further transformed into emodin anthrone. The next step is performed by the anthrone oxygenase mdpH that catalyzes the oxidation of emodinanthrone to emodin. Emodin is further modified to yield monodictyphenone via several steps involving mdpB, mdpC mdpJ, mdpK and mdpL. The short chain dehydrogenase mdpC converts the tautomers of emodin hydroquinone into the 3-hydroxy-3,4-dihydroan-thracen-1(2H)-one derivative. These enzymes with xptA, xptB and xptC are also proposed to be involved in the synthesis of shamixanthone from emodin. Especially, direct reduction of emodin by the short chain dehydrogenase mdpC followed by dehydration catalyzed by the scytalone dehydratase-like protein mdpB gives loss of oxygen and formation of chrysophanol intermediate in two simple steps. The protein is Atrochrysone carboxylic acid synthase of Emericella nidulans (strain FGSC A4 / ATCC 38163 / CBS 112.46 / NRRL 194 / M139) (Aspergillus nidulans).